A 312-amino-acid chain; its full sequence is Aquaporin-6 (312 aa).

At 1-50 (MDDKFDDDALPNSKTTAKDYEDKLPEYDYTTTFPNTWMRLREPFREYFAE) the chain is on the cytoplasmic side. Residues 51 to 71 (FVGVAVLIIFGVGADCQVVLS) form a helical membrane-spanning segment. Topologically, residues 72–89 (ANTGVASSPKGSYLSLNC) are extracellular. A helical transmembrane segment spans residues 90 to 110 (GWAIGTAMGVWISGGISGGHI). The NPA 1 signature appears at 111–113 (NPA). The Cytoplasmic portion of the chain corresponds to 111–128 (NPAVTLAMATWRGFPWWK). The chain crosses the membrane as a helical span at residues 129-149 (VPGFIFAQLLGGIVGAGLVYV). Topologically, residues 150-183 (NYIHAIDIVEGGRHIRTLDTAGLFATYAADYMTN) are extracellular. Residue N183 is glycosylated (N-linked (GlcNAc...) asparagine). Residues 184–204 (LSCFFSEFLATAVLIIVIHAM) form a helical membrane-spanning segment. At 205-213 (NDKRNTPPP) the chain is on the cytoplasmic side. A helical membrane pass occupies residues 214-234 (AGIVPFVLFFLILGIGASLGM). Residues 235-267 (ETGYAINPARDLGPRMLTAMVGYGRQVFAFRNQ) are Extracellular-facing. Residues 241-243 (NPA) carry the NPA 2 motif. The helical transmembrane segment at 268 to 288 (YWIWCPVLAPFLGAQVGTIFY) threads the bilayer. At 289 to 312 (DLFFYKGQDNVFGRLGSHIHISPA) the chain is on the cytoplasmic side.

It belongs to the MIP/aquaporin (TC 1.A.8) family.

Its subcellular location is the membrane. It carries out the reaction H2O(in) = H2O(out). Functionally, water channel required to facilitate the transport of water across membranes. Does not mediate the transport carbon dioxide nor nitric oxide across the membrane. Plays a key role in root water transport of mycorrhizal plant such ectomycorrhizal white spruce or trembling aspen via the hydration at the hyphal-root interphase. Contributes in fungal cellular processes during the basidiocarp formation. This Laccaria bicolor (Bicoloured deceiver) protein is Aquaporin-6.